We begin with the raw amino-acid sequence, 312 residues long: Ribosomal RNA small subunit methyltransferase H (312 aa).

Residues 30-32 (GGH), Asp50, Phe80, Asp98, and Gln105 each bind S-adenosyl-L-methionine.

Belongs to the methyltransferase superfamily. RsmH family.

It localises to the cytoplasm. The enzyme catalyses cytidine(1402) in 16S rRNA + S-adenosyl-L-methionine = N(4)-methylcytidine(1402) in 16S rRNA + S-adenosyl-L-homocysteine + H(+). Functionally, specifically methylates the N4 position of cytidine in position 1402 (C1402) of 16S rRNA. This Lawsonia intracellularis (strain PHE/MN1-00) protein is Ribosomal RNA small subunit methyltransferase H.